An 896-amino-acid polypeptide reads, in one-letter code: MPFSCFVFSQFLRFLRPEFFLGDVSPQGSLISREFSLGPTASLAVLWDERFLDGFLSSARLCLLLDDARRLGRTSRREKSFVLSSRGDESVRSPQGRQVHSPGFAPAVDNETASVASHISRAPRVSSKLHCSCTLRPVFFSALSRLSDFVVSSLLLCVSCSFASSALRSLPRVFSSRLSRAMPRSKKRGGAAKPPSAFSSLVSEMKEIPSPRSRSPSDPDSSSRPCASFLRSCEESLREEAATAATTVPQLSAASSSCCSRSNSSSMQTAEGRVVASPDLAEEEGVSPSRRVHSSQKRGNAGVHERRAEATCCAPRDRHGGDRPASSASFLTCDGSSRELRMQSLLPDATGGRPVAAAAHLAPCCRVPPSDASTPRSRLGQEGLERELASFPEVDEHWPHRLAETHSACSRGHRNPRAVQRHSVGDCGLRGGDTRGCCSGAEKARRESCCEADRTTEAGEGRETGTQRARRKLVMASMVCCVFMFVEIVAGVLANSLALMTDASHLLSDLCAFLISLFALWVSELKGNPSMSFGYHRAEILGALLSVFLIWVLTAVLIYAACFRLVDPPQVDGELMFWTALLGTLANLFMTHILKVHSHGIGQVHAHSCCGEETFEPLRNLQASSSSPEKPEESPASRASQAGRLAWDPEVSPSGRDAEAGRDAEAGRDAEAGRDAETGRGGEVGRGGEVGRDEKPRRPFSASSAGSTAASGDIYVRLEEDMDSERNYENMNLRAAYIHALGDLLQNIGVMIASALIWWRPDWAIADPICTFIFSIFVLFTTLSILKEALNVLMEGTPVGIDARALQEDLLLLPGVVEVHDLHVWSLSVGKPSLACHVVVENEDVARSVLRKATVLCQRKYAILHTTIQTDFSSDKRTCETEAHQKCSDPMKVFRR.

Residues Met1–Lys472 lie on the Cytoplasmic side of the membrane. A compositionally biased stretch (basic and acidic residues) spans Val82–Val91. 3 disordered regions span residues Val82 to Phe104, Met205 to Ala227, and Ser255 to Ser329. Low complexity-rich tracts occupy residues Ser210–Pro225 and Ser255–Ser266. The span at Val303 to Asp322 shows a compositional bias: basic and acidic residues. A helical membrane pass occupies residues Leu473 to Leu493. The Vacuolar portion of the chain corresponds to Ala494–Asp502. A helical transmembrane segment spans residues Ala503–Ser523. Topologically, residues Glu524–Glu539 are cytoplasmic. A helical membrane pass occupies residues Ile540–Ala560. Over Ala561–Gly573 the chain is Vacuolar. The helical transmembrane segment at Glu574 to Leu594 threads the bilayer. Topologically, residues Lys595–Tyr737 are cytoplasmic. Residues Leu621 to Ser707 form a disordered region. The segment covering Arg656–Arg680 has biased composition (basic and acidic residues). The helical transmembrane segment at Ile738–Trp758 threads the bilayer. The Vacuolar portion of the chain corresponds to Trp759–Asp762. The chain crosses the membrane as a helical span at residues Trp763–Leu783. The Cytoplasmic portion of the chain corresponds to Ser784–Arg896.

It belongs to the cation diffusion facilitator (CDF) transporter (TC 2.A.4) family. SLC30A subfamily.

Its subcellular location is the vacuole membrane. The protein localises to the cytoplasmic vesicle membrane. Vacuolar zinc transporter that is probably involved in the transfer of zinc ions from the cytosol to the vacuole for intracellular storage. Plays an essential role in extracellular zinc tolerance. This is Vacuolar zinc transporter TgZnT from Toxoplasma gondii (strain ATCC 50853 / GT1).